A 569-amino-acid chain; its full sequence is Spermatogenesis-associated protein 16 (569 aa).

A compositionally biased stretch (basic and acidic residues) spans 67–92; it reads KGIKEKQSNDLEKAAFKRKAEGEEKP. The tract at residues 67–96 is disordered; sequence KGIKEKQSNDLEKAAFKRKAEGEEKPTRKK.

It belongs to the SPATA16 family. Expressed in testis.

It localises to the golgi apparatus. Its subcellular location is the cytoplasmic vesicle. It is found in the secretory vesicle. The protein resides in the acrosome. In terms of biological role, essential for spermiogenesis and male fertility. Involved in the formation of sperm acrosome during spermatogenesis. This is Spermatogenesis-associated protein 16 (SPATA16) from Homo sapiens (Human).